A 414-amino-acid polypeptide reads, in one-letter code: Arrestin domain-containing protein 3 (414 aa).

2 short sequence motifs (PPxY motif) span residues 346-349 (PPSY) and 391-394 (PPLY). The tract at residues 393 to 414 (LYSEIDPNPDQSADDRPSCPSR) is disordered. The span at 405 to 414 (ADDRPSCPSR) shows a compositional bias: basic and acidic residues.

It belongs to the arrestin family. As to quaternary structure, interacts (via PPxY motifs) with NEDD4 (via WW domains). Interacts with ADRB2. Interacts with ADRB3. Interacts with HGS (via PPxY motifs). Does not bind TXN (thioredoxin). Interacts with ITCH.

It localises to the cytoplasm. Its subcellular location is the cell membrane. The protein localises to the lysosome. The protein resides in the endosome. It is found in the early endosome. Functionally, adapter protein that plays a role in regulating cell-surface expression of adrenergic receptors and probably also other G protein-coupled receptors. Plays a role in NEDD4-mediated ubiquitination and endocytosis af activated ADRB2 and subsequent ADRB2 degradation. May recruit NEDD4 to ADRB2. Alternatively, may function as adapter protein that does not play a major role in recruiting NEDD4 to ADRB2, but rather plays a role in a targeting ADRB2 to endosomes. This Pongo abelii (Sumatran orangutan) protein is Arrestin domain-containing protein 3 (ARRDC3).